Reading from the N-terminus, the 382-residue chain is Mannitol-1-phosphate 5-dehydrogenase (382 aa).

An NAD(+)-binding site is contributed by 3-14; it reads ALHFGAGNIGRG. At Lys269 the chain carries N6-acetyllysine.

Belongs to the mannitol dehydrogenase family.

The enzyme catalyses D-mannitol 1-phosphate + NAD(+) = beta-D-fructose 6-phosphate + NADH + H(+). This is Mannitol-1-phosphate 5-dehydrogenase from Escherichia coli O17:K52:H18 (strain UMN026 / ExPEC).